We begin with the raw amino-acid sequence, 174 residues long: Chorion class CB protein M5H4 (174 aa).

Residues 1-20 (MTTIVVLICASALFVQLAFS) form the signal peptide. The tract at residues 21 to 71 (QCLGRDPVIGFGGAYGSGWGGYDAISPYDGLGYGVPYSAGFIGLSPSNLAA) is left arm. Positions 72–142 (SCGGALAVNS…GDGAIGIVSE (71 aa)) are central domain. The tract at residues 143 to 174 (APIVAPASIGYGQWPVNAGYKGIGPCGCGGLY) is right arm.

Belongs to the chorion protein family.

Functionally, this protein is one of many from the eggshell of the silk moth. This chain is Chorion class CB protein M5H4, found in Bombyx mori (Silk moth).